The primary structure comprises 178 residues: Small ribosomal subunit protein uS4 (178 aa).

The S4 RNA-binding domain maps to 104–166 (RRLQTIVYRK…PNSPMASENH (63 aa)). The disordered stretch occupies residues 158 to 178 (NSPMASENHPERTAAVSEENQ).

Belongs to the universal ribosomal protein uS4 family. As to quaternary structure, part of the 30S ribosomal subunit. Contacts protein S5. The interaction surface between S4 and S5 is involved in control of translational fidelity.

Functionally, one of the primary rRNA binding proteins, it binds directly to 16S rRNA where it nucleates assembly of the body of the 30S subunit. Its function is as follows. With S5 and S12 plays an important role in translational accuracy. This chain is Small ribosomal subunit protein uS4, found in Methanococcus maripaludis (strain C6 / ATCC BAA-1332).